Consider the following 440-residue polypeptide: Protein TENP (440 aa).

In terms of tissue distribution, expressed in developing retina and brain, but not in heart, liver or kidney. In brain, located in a narrow strip in the boundary between the ventricular zone (consisting of proliferating cells) and the intermediate zone (consisting of postmitotic, differentiating cells). Expressed in all major regions of the developing brain, including the myelencephalon, the mesencephalon, the telencephalon and the diencephalon. In the developing retina, expression is scattered across the retinal neural epithelium. Expressed in egg white (at protein level). Expressed in the magnum of the oviduct (at protein level).

Its function is as follows. May play a role in the developmental transition from cell proliferation to cell differentiation during neurogenesis. This Gallus gallus (Chicken) protein is Protein TENP (TENP).